Reading from the N-terminus, the 48-residue chain is Large ribosomal subunit protein bL33A (48 aa).

This sequence belongs to the bacterial ribosomal protein bL33 family.

This is Large ribosomal subunit protein bL33A from Shouchella clausii (strain KSM-K16) (Alkalihalobacillus clausii).